We begin with the raw amino-acid sequence, 413 residues long: Phosphatidylcholine-sterol acyltransferase (413 aa).

An N-terminal signal peptide occupies residues 1-22 (GRTGAGFTLLTLLLLLPQPTSQ). Cys-72 and Cys-96 form a disulfide bridge. Asn-106 carries N-linked (GlcNAc...) asparagine glycosylation. Ser-203 serves as the catalytic Charge relay system. Ser-203 acts as the Nucleophile in catalysis. An N-linked (GlcNAc...) asparagine glycan is attached at Asn-294. An intrachain disulfide couples Cys-335 to Cys-378. Active-site charge relay system residues include Asp-367 and His-399. N-linked (GlcNAc...) asparagine glycosylation is present at Asn-406.

It belongs to the AB hydrolase superfamily. Lipase family. As to expression, detected in blood plasma (at protein level). Expressed in liver, brain and adrenal glands. Lower expression in testes. In laying hens, expressed higher in brain than in liver. In roosters, higher levels in liver than in brain.

The protein resides in the secreted. It catalyses the reaction a sterol + a 1,2-diacyl-sn-glycero-3-phosphocholine = a sterol ester + a 1-acyl-sn-glycero-3-phosphocholine. With respect to regulation, APOA1 is the most potent activator in plasma. Also activated by APOE, APOC1 and APOA4. Its function is as follows. Central enzyme in the extracellular metabolism of plasma lipoproteins. Synthesized mainly in the liver and secreted into plasma where it converts cholesterol and phosphatidylcholines (lecithins) to cholesteryl esters and lysophosphatidylcholines on the surface of high and low density lipoproteins (HDLs and LDLs). The cholesterol ester is then transported back to the liver. Also produced in the brain by primary astrocytes, and esterifies free cholesterol on nascent APOE-containing lipoproteins secreted from glia and influences cerebral spinal fluid (CSF) APOE- and APOA1 levels. Together with APOE and the cholesterol transporter ABCA1, plays a key role in the maturation of glial-derived, nascent lipoproteins. Required for remodeling high-density lipoprotein particles into their spherical forms. Has a preference for plasma 16:0-18:2 or 18:O-18:2 phosphatidylcholines. The protein is Phosphatidylcholine-sterol acyltransferase (LCAT) of Gallus gallus (Chicken).